A 343-amino-acid chain; its full sequence is Heat-inducible transcription repressor HrcA (343 aa).

This sequence belongs to the HrcA family.

In terms of biological role, negative regulator of class I heat shock genes (grpE-dnaK-dnaJ and groELS operons). Prevents heat-shock induction of these operons. This is Heat-inducible transcription repressor HrcA from Caldanaerobacter subterraneus subsp. tengcongensis (strain DSM 15242 / JCM 11007 / NBRC 100824 / MB4) (Thermoanaerobacter tengcongensis).